The following is a 104-amino-acid chain: uncharacterized protein (104 aa).

Residues 77–98 traverse the membrane as a helical segment; that stretch reads IAAVRANIIICACFFYLFCYCS.

Its subcellular location is the membrane. This is an uncharacterized protein from Saccharomyces cerevisiae (strain ATCC 204508 / S288c) (Baker's yeast).